The sequence spans 435 residues: 3-phosphoshikimate 1-carboxyvinyltransferase (435 aa).

3-phosphoshikimate contacts are provided by Lys15, Ser16, and Arg20. Phosphoenolpyruvate is bound at residue Lys15. Residues Gly96 and Arg124 each contribute to the phosphoenolpyruvate site. 3-phosphoshikimate-binding residues include Ser169, Gln171, Ser195, Asp318, and Lys345. Residue Gln171 participates in phosphoenolpyruvate binding. Catalysis depends on Asp318, which acts as the Proton acceptor. Arg349 and Arg393 together coordinate phosphoenolpyruvate.

It belongs to the EPSP synthase family. Monomer.

It is found in the cytoplasm. The enzyme catalyses 3-phosphoshikimate + phosphoenolpyruvate = 5-O-(1-carboxyvinyl)-3-phosphoshikimate + phosphate. Its pathway is metabolic intermediate biosynthesis; chorismate biosynthesis; chorismate from D-erythrose 4-phosphate and phosphoenolpyruvate: step 6/7. In terms of biological role, catalyzes the transfer of the enolpyruvyl moiety of phosphoenolpyruvate (PEP) to the 5-hydroxyl of shikimate-3-phosphate (S3P) to produce enolpyruvyl shikimate-3-phosphate and inorganic phosphate. This Chlorobium chlorochromatii (strain CaD3) protein is 3-phosphoshikimate 1-carboxyvinyltransferase.